The following is a 77-amino-acid chain: Putative defensin-like protein 185 (77 aa).

Positions Met-1 to Ala-22 are cleaved as a signal peptide. 4 disulfides stabilise this stretch: Cys-25-Cys-77, Cys-31-Cys-54, Cys-40-Cys-71, and Cys-44-Cys-73.

It belongs to the DEFL family.

The protein localises to the secreted. This Arabidopsis thaliana (Mouse-ear cress) protein is Putative defensin-like protein 185 (LCR39).